The primary structure comprises 609 residues: Proteasome-associated ATPase (609 aa).

The interval 1-22 (MGESERSEAFNPPREAGMSSGD) is disordered. A coiled-coil region spans residues 20-96 (SGDIAELEQL…LREEVDRLGQ (77 aa)). 296–301 (GCGKTL) serves as a coordination point for ATP. The segment at 608-609 (YL) is docks into pockets in the proteasome alpha-ring.

This sequence belongs to the AAA ATPase family. Homohexamer. Assembles into a hexameric ring structure that caps the 20S proteasome core. Strongly interacts with the prokaryotic ubiquitin-like protein Pup through a hydrophobic interface; the interacting region of ARC lies in its N-terminal coiled-coil domain. There is one Pup binding site per ARC hexamer ring. Upon ATP-binding, the C-terminus of ARC interacts with the alpha-rings of the proteasome core, possibly by binding to the intersubunit pockets.

It functions in the pathway protein degradation; proteasomal Pup-dependent pathway. In terms of biological role, ATPase which is responsible for recognizing, binding, unfolding and translocation of pupylated proteins into the bacterial 20S proteasome core particle. May be essential for opening the gate of the 20S proteasome via an interaction with its C-terminus, thereby allowing substrate entry and access to the site of proteolysis. Thus, the C-termini of the proteasomal ATPase may function like a 'key in a lock' to induce gate opening and therefore regulate proteolysis. This is Proteasome-associated ATPase from Mycobacterium leprae (strain Br4923).